A 186-amino-acid polypeptide reads, in one-letter code: Interferon lambda-3 (186 aa).

The signal sequence occupies residues 1–21; it reads MVCYGVTIILVGTLGSLLVGA. 3 disulfides stabilise this stretch: C31–C128, C65–C160, and C178–C185.

The protein belongs to the lambda interferon family.

The protein resides in the secreted. Its function is as follows. Cytokine which plays a critical role in the antiviral host defense, predominantly in the epithelial tissues. Acts as a ligand for the heterodimeric class II cytokine receptor composed of IL10RB and IFNLR1, and receptor engagement leads to the activation of the JAK/STAT signaling pathway resulting in the expression of IFN-stimulated genes (ISG), which mediate the antiviral state. Has a restricted receptor distribution and therefore restricted targets: is primarily active in epithelial cells and this cell type-selective action is because of the epithelial cell-specific expression of its receptor IFNLR1. Exhibits antiviral activity against the H5N1 influenza A virus. Induces the expression of the antiviral MX protein in epithelial-rich tissues, such as intestine, trachea and lung. This Gallus gallus (Chicken) protein is Interferon lambda-3 (IFNL3).